A 440-amino-acid chain; its full sequence is Mitochondrial translation factor 2 (440 aa).

A mitochondrion-targeting transit peptide spans 1 to 15 (MIRTSSILKNCNYRY).

It is found in the mitochondrion matrix. Required for the processing and/or for the stability of the CYTB and COX1 intron-containing pre-mRNAs and of the ATP6 transcript. Could be a stem-loop RNA-binding protein that plays a role in determining RNA stability. This Saccharomyces cerevisiae (strain ATCC 204508 / S288c) (Baker's yeast) protein is Mitochondrial translation factor 2 (MTF2).